A 135-amino-acid chain; its full sequence is Regulator of ribonuclease activity B (135 aa).

A disordered region spans residues 114-135 (WGTYFESDEDDEEDESEDKPEA). Residues 119 to 135 (ESDEDDEEDESEDKPEA) show a composition bias toward acidic residues.

The protein belongs to the RraB family. As to quaternary structure, interacts with the C-terminal region of Rne.

Its subcellular location is the cytoplasm. Globally modulates RNA abundance by binding to RNase E (Rne) and regulating its endonucleolytic activity. Can modulate Rne action in a substrate-dependent manner by altering the composition of the degradosome. This Photobacterium profundum (strain SS9) protein is Regulator of ribonuclease activity B.